The sequence spans 62 residues: Large ribosomal subunit protein bL28 (62 aa).

Belongs to the bacterial ribosomal protein bL28 family.

In Staphylococcus haemolyticus (strain JCSC1435), this protein is Large ribosomal subunit protein bL28.